A 61-amino-acid chain; its full sequence is Rubredoxin 3 (61 aa).

Positions 1–53 (MSSYRCPVCEYVYDESKGAPREGFPAGTPWDAVPDDWCCPDCGVREKLDFEPM) constitute a Rubredoxin-like domain. Fe cation is bound by residues Cys6, Cys9, Cys39, and Cys42.

This sequence belongs to the rubredoxin family. It depends on Fe(3+) as a cofactor.

Involved in the hydrocarbon hydroxylating system, which transfers electrons from NADH to rubredoxin reductase and then through rubredoxin to alkane 1 monooxygenase. This chain is Rubredoxin 3 (rubA3), found in Rhodococcus erythropolis (Arthrobacter picolinophilus).